The primary structure comprises 323 residues: MADKQISLPAKLINGGIAGLIGVTCVFPIDLAKTRLQNQQNGQRMYASMSDCLIKTIRSEGYFGMYRGAAVNLTLVTPEKAIKLAANDFFRHQLSKDGQKLTLPKEMLAGCGAGTCQVIVTTPMEMLKIQLQDAGRIAAQRKMLAAQAQLATQGGGQPSVEAPAAPRPTATQLTRDLLRNHGIAGLYKGLGATLLRDVPFSIVYFPLFANLNQLGRPSSEEKSPFYVSFLAGCVAGSAAAVAVNPCDVVKTRLQSLERGVNEDTYSGFLDCARKIWRHEGPSAFLKGAYCRALVIAPLFGIAQVVYFLGIAESLLGLLQEPQA.

Solcar repeat units lie at residues 6 to 93 (ISLP…FRHQ), 101 to 214 (LTLP…LNQL), and 223 to 312 (SPFY…GIAE). The next 6 membrane-spanning stretches (helical) occupy residues 12–32 (LING…IDLA), 62–82 (YFGM…EKAI), 107–127 (MLAG…MEML), 189–209 (GLGA…PLFA), 223–243 (SPFY…AVAV), and 292–312 (ALVI…GIAE).

The protein belongs to the mitochondrial carrier (TC 2.A.29) family. As to expression, detected in insulin-secreting beta-cells and pancreatic islets (at the protein level).

It localises to the mitochondrion inner membrane. It carries out the reaction L-glutamate(in) + H(+)(in) = L-glutamate(out) + H(+)(out). Functionally, mitochondrial glutamate/H(+) symporter. Responsible for the transport of glutamate from the cytosol into the mitochondrial matrix with the concomitant import of a proton. Plays a role in the control of glucose-stimulated insulin secretion. In Rattus norvegicus (Rat), this protein is Mitochondrial glutamate carrier 1.